The following is a 245-amino-acid chain: MKNRIPVVLLACGSFNPITNMHLRLFEVARDHLHQTGRYQVIEGIISPVNDSYGKKDLVASHHRVAMARLALQTSDWIRVDPWESEQAQWMETVKVLRHHHRELLRSSAQMDGPDPSKTPSASAALPELKLLCGADVLKTFQTPNLWKDTHIQEIVEKFGLVCVSRSGHDPERYISDSPILQQFQHNIHLAREPVLNEISATYVRKALGQGQSVKYLLPEAVITYIRDQGLYINDGSWKGKGKTG.

Residues S14 and F15 each contribute to the NAD(+) site. ATP is bound by residues H22 and K56. Residues W90, T93, G134, and D136 each contribute to the NAD(+) site. K139 lines the ATP pocket. The NAD(+) site is built by L146, W147, R166, and N197. Position 202 to 205 (202 to 205 (TYVR)) interacts with ATP.

It belongs to the eukaryotic NMN adenylyltransferase family. Homotetramer. It depends on Mg(2+) as a cofactor.

The protein localises to the mitochondrion. It catalyses the reaction beta-nicotinamide D-ribonucleotide + ATP + H(+) = diphosphate + NAD(+). The catalysed reaction is nicotinate beta-D-ribonucleotide + ATP + H(+) = deamido-NAD(+) + diphosphate. It participates in cofactor biosynthesis; NAD(+) biosynthesis; NAD(+) from nicotinamide D-ribonucleotide: step 1/1. Its pathway is cofactor biosynthesis; NAD(+) biosynthesis; deamido-NAD(+) from nicotinate D-ribonucleotide: step 1/1. Activity is strongly inhibited by galotannin. Inhibited by P1-(adenosine-5')-P4-(nicotinic-acid-riboside-5')-tetraphosphate (Nap4AD). Catalyzes the formation of NAD(+) from nicotinamide mononucleotide (NMN) and ATP. Can also use the deamidated form; nicotinic acid mononucleotide (NaMN) as substrate with the same efficiency. Can use triazofurin monophosphate (TrMP) as substrate. Can also use GTP and ITP as nucleotide donors. Also catalyzes the reverse reaction, i.e. the pyrophosphorolytic cleavage of NAD(+). For the pyrophosphorolytic activity, can use NAD(+), NADH, NaAD, nicotinic acid adenine dinucleotide phosphate (NHD), nicotinamide guanine dinucleotide (NGD) as substrates. Fails to cleave phosphorylated dinucleotides NADP(+), NADPH and NaADP(+). Protects against axonal degeneration following injury. May be involved in the maintenance of axonal integrity. Also functions as a stress-response chaperone protein that prevents toxic aggregation of proteins; this function may be independent of its NAD(+) synthesis activity. The sequence is that of Nicotinamide/nicotinic acid mononucleotide adenylyltransferase 3 from Mus musculus (Mouse).